The following is a 157-amino-acid chain: Lipoprotein signal peptidase (157 aa).

Transmembrane regions (helical) follow at residues 10-30 (FIFI…KYAI), 36-56 (YESS…FSLL), 58-78 (FLEG…FIFL), and 84-104 (LFKA…SNIL). Catalysis depends on residues Asp114 and Asp131. A helical transmembrane segment spans residues 123-143 (DFAIFNFADVMIDVGVGVLLI).

This sequence belongs to the peptidase A8 family.

Its subcellular location is the cell inner membrane. The catalysed reaction is Release of signal peptides from bacterial membrane prolipoproteins. Hydrolyzes -Xaa-Yaa-Zaa-|-(S,diacylglyceryl)Cys-, in which Xaa is hydrophobic (preferably Leu), and Yaa (Ala or Ser) and Zaa (Gly or Ala) have small, neutral side chains.. It participates in protein modification; lipoprotein biosynthesis (signal peptide cleavage). Functionally, this protein specifically catalyzes the removal of signal peptides from prolipoproteins. In Helicobacter acinonychis (strain Sheeba), this protein is Lipoprotein signal peptidase.